A 248-amino-acid chain; its full sequence is tRNA (guanine-N(1)-)-methyltransferase (248 aa).

Residues glycine 113 and 133–138 contribute to the S-adenosyl-L-methionine site; that span reads IGDFVL.

Belongs to the RNA methyltransferase TrmD family. Homodimer.

The protein resides in the cytoplasm. The catalysed reaction is guanosine(37) in tRNA + S-adenosyl-L-methionine = N(1)-methylguanosine(37) in tRNA + S-adenosyl-L-homocysteine + H(+). Its function is as follows. Specifically methylates guanosine-37 in various tRNAs. The polypeptide is tRNA (guanine-N(1)-)-methyltransferase (Dehalococcoides mccartyi (strain ATCC BAA-2100 / JCM 16839 / KCTC 5957 / BAV1)).